A 483-amino-acid chain; its full sequence is Acetyl-coenzyme A carboxylase carboxyl transferase subunit beta, chloroplastic (483 aa).

Positions 219 to 483 (LWVQCENCYG…LHTFFPLNQN (265 aa)) constitute a CoA carboxyltransferase N-terminal domain. Positions 223, 226, 242, and 245 each coordinate Zn(2+). Residues 223–245 (CENCYGLNYKKFFKSKMNLCEQC) form a C4-type zinc finger.

This sequence belongs to the AccD/PCCB family. As to quaternary structure, acetyl-CoA carboxylase is a heterohexamer composed of biotin carboxyl carrier protein, biotin carboxylase and 2 subunits each of ACCase subunit alpha and ACCase plastid-coded subunit beta (accD). Requires Zn(2+) as cofactor.

Its subcellular location is the plastid. It is found in the chloroplast stroma. The catalysed reaction is N(6)-carboxybiotinyl-L-lysyl-[protein] + acetyl-CoA = N(6)-biotinyl-L-lysyl-[protein] + malonyl-CoA. It functions in the pathway lipid metabolism; malonyl-CoA biosynthesis; malonyl-CoA from acetyl-CoA: step 1/1. In terms of biological role, component of the acetyl coenzyme A carboxylase (ACC) complex. Biotin carboxylase (BC) catalyzes the carboxylation of biotin on its carrier protein (BCCP) and then the CO(2) group is transferred by the transcarboxylase to acetyl-CoA to form malonyl-CoA. The protein is Acetyl-coenzyme A carboxylase carboxyl transferase subunit beta, chloroplastic of Guizotia abyssinica (Niger).